A 482-amino-acid chain; its full sequence is MSSKKRSFGDIEFGESDEVGGTNVDVNGEDDFENDDEVESFEDDEQSFEEIEEGGEEGGDNDGEDKGPKKVWRAGVDPLEEDEVLDYDSTAYDMMHSMSVEWPCLSFHPIKDELGAQRNKYPHTMYLVAGTQADEAKNNKVIIMKAKQLHKTKHDDEDSDDDEDSDDDEESDDEDDEDKDVDPELQLAFINHNGAVNRIRSMDQQSNIVATWSDNRSVYIWNIANHLKALDNETVAPKQTAPLHTISNHSIEGYALDWSPKIAGRLATGDCNNSIFVTNASESTWKTDTQAFKGHTESVEDIQWSPSEEKVFASCSIDQTVRIWDIRKPKPAITVKAHTADVNVISWSRNVEYLLVSGCDDGSFRVWDLRAFKDNSPVSDFKYHTGPITSIEWNPYEESQVIVSSSDDQVTIWDFSLEEDTEEFTNANANPDDDFQYPPQLFFIHQGQHDIKEVHWHPQIPHVAISTSIDGFNIFKSSNSEE.

2 disordered regions span residues 1–75 (MSSK…WRAG) and 148–180 (QLHKTKHDDEDSDDDEDSDDDEESDDEDDEDKD). Composition is skewed to acidic residues over residues 27–63 (NGEDDFENDDEVESFEDDEQSFEEIEEGGEEGGDNDG) and 157–180 (EDSDDDEDSDDDEESDDEDDEDKD). 5 WD repeats span residues 191–231 (NHNG…KALD), 294–334 (GHTE…PAIT), 337–377 (AHTA…DNSP), 383–423 (YHTG…DTEE), and 446–482 (QGQHDIKEVHWHPQIPHVAISTSIDGFNIFKSSNSEE).

It is found in the nucleus. It localises to the nucleolus. The polypeptide is Glutamate-rich WD repeat-containing protein 1 (grwd1) (Dictyostelium discoideum (Social amoeba)).